The primary structure comprises 461 residues: Serine incorporator 5 (461 aa).

Topologically, residues 1-36 (MSARCCAGQLACCCGSAGCSLCCGCCPKFRQSRTTR) are extracellular. A helical membrane pass occupies residues 37–57 (FMYLFYFILVIALCCVMMTPS). Topologically, residues 58–90 (VMKQVKDHIPFFEEFCKKTQAGGDACENLVGYS) are cytoplasmic. Residues 91–111 (AVYRVCFGMACFFALFCLLTL) form a helical membrane-spanning segment. Residues 112 to 125 (KVNNSKSCRAYIHN) lie on the Extracellular side of the membrane. Asn114 is a glycosylation site (N-linked (GlcNAc...) asparagine). A helical membrane pass occupies residues 126–146 (GFWFFKLLLLGAMCSGAFFIP). Residues 147–157 (DQETFLKVWRY) are Cytoplasmic-facing. The helical transmembrane segment at 158–178 (VGAGGSFLFICIQLLLIVQFA) threads the bilayer. Over 179 to 200 (HKWNKNWTAGTVRNKLWYASLS) the chain is Extracellular. An N-linked (GlcNAc...) asparagine glycan is attached at Asn184. Residues 201–221 (LVTLIMYSVAVGGLALMAVFY) form a helical membrane-spanning segment. Residues 222-231 (TQWDDCMDNK) lie on the Cytoplasmic side of the membrane. Residues 232–252 (ILLGVHGGLCVLISLVAISPC) traverse the membrane as a helical segment. The Extracellular segment spans residues 253 to 260 (VQNRQPHS). Residues 261 to 281 (GLLQSGLISCYVTYLTFSALT) form a helical membrane-spanning segment. The Cytoplasmic segment spans residues 282–312 (SKPEKKVLDEHGKNVTICAPDFGQDLHRDEN). The helical transmembrane segment at 313-333 (MVTWLGTLLLIVCISYSCLTS) threads the bilayer. Residues 334-392 (TTRSSSDALQSRYGAPELEVARCCFCFGPDGEDTEEQQNVKKGPRVIYDEKKGTVYSYS) lie on the Extracellular side of the membrane. Residues 393–413 (YFHFVFFLASLYVMMTLTSWF) form a helical membrane-spanning segment. At 414 to 422 (HYENATIKT) the chain is on the cytoplasmic side. A helical transmembrane segment spans residues 423-443 (FFSGWSVFWVKMASCWMCVLL). At 444–461 (YLQTLVAPLCCPSRQFSV) the chain is on the extracellular side.

This sequence belongs to the TDE1 family.

It is found in the cell membrane. The catalysed reaction is a 1,2-diacyl-sn-glycero-3-phospho-L-serine(in) = a 1,2-diacyl-sn-glycero-3-phospho-L-serine(out). It catalyses the reaction a 1,2-diacyl-sn-glycero-3-phosphocholine(in) = a 1,2-diacyl-sn-glycero-3-phosphocholine(out). It carries out the reaction a 1,2-diacyl-sn-glycero-3-phosphoethanolamine(in) = a 1,2-diacyl-sn-glycero-3-phosphoethanolamine(out). In terms of biological role, restriction factor required to restrict infectivity of gammaretroviruses: acts by inhibiting an early step of viral infection. Impairs the penetration of the viral particle into the cytoplasm. Non-ATP-dependent, non-specific lipid transporter for phosphatidylserine, phosphatidylcholine, and phosphatidylethanolamine. Functions as a scramblase that flips lipids in both directions across the membrane. Phospholipid scrambling results in gammaretroviral surface exposure of phosphatidylserine and loss of membrane asymmetry, which leads to loss of infectivity. Enhances the incorporation of serine into phosphatidylserine and sphingolipids. May play a role in providing serine molecules for the formation of myelin glycosphingolipids in oligodendrocytes. This is Serine incorporator 5 (Serinc5) from Mus musculus (Mouse).